Here is a 375-residue protein sequence, read N- to C-terminus: Trichodiene synthase (375 aa).

It belongs to the trichodiene synthase family.

The enzyme catalyses (2E,6E)-farnesyl diphosphate = trichodiene + diphosphate. It participates in sesquiterpene biosynthesis; trichothecene biosynthesis. In terms of biological role, TS is a member of the terpene cyclase group of enzymes. It catalyzes the isomerization and cyclization of farnesyl pyro-phosphate to form trichodiene, the first cyclic intermediate in the biosynthetic pathway for trichothecenes. It serves to branch trichothecene biosynthesis from the isoprenoid pathway. In Fusarium cortaderiae, this protein is Trichodiene synthase (TRI5).